Reading from the N-terminus, the 118-residue chain is DNA-binding protein MmarC6_0793 (118 aa).

Positions 1–12 are enriched in basic and acidic residues; sequence MNPEEIRQRRLQ. Residues 1-33 are disordered; the sequence is MNPEEIRQRRLQEMQAKAQEQGAQDPEAQRQMQ. Residues 24 to 33 show a composition bias toward low complexity; sequence QDPEAQRQMQ.

It belongs to the PDCD5 family.

The chain is DNA-binding protein MmarC6_0793 from Methanococcus maripaludis (strain C6 / ATCC BAA-1332).